A 121-amino-acid polypeptide reads, in one-letter code: Ribosome-binding factor A (121 aa).

It belongs to the RbfA family. As to quaternary structure, monomer. Binds 30S ribosomal subunits, but not 50S ribosomal subunits or 70S ribosomes.

It localises to the cytoplasm. Functionally, one of several proteins that assist in the late maturation steps of the functional core of the 30S ribosomal subunit. Associates with free 30S ribosomal subunits (but not with 30S subunits that are part of 70S ribosomes or polysomes). Required for efficient processing of 16S rRNA. May interact with the 5'-terminal helix region of 16S rRNA. This chain is Ribosome-binding factor A, found in Clostridium kluyveri (strain NBRC 12016).